The following is a 114-amino-acid chain: Transmembrane protein 14DP (114 aa).

4 helical membrane passes run 8 to 28 (LVPL…GGIV), 36 to 56 (APSL…AYQL), 63 to 80 (VWDF…IMGM), and 83 to 103 (YYYG…LMAA).

Belongs to the TMEM14 family.

It localises to the membrane. The protein is Transmembrane protein 14DP (TMEM14DP) of Homo sapiens (Human).